The sequence spans 173 residues: Putative metal-dependent hydrolase BcerKBAB4_2443 (173 aa).

3 residues coordinate Zn(2+): His65, His156, and His160.

Belongs to the metal hydrolase YfiT family. In terms of assembly, homodimer. Zn(2+) serves as cofactor.

It localises to the cytoplasm. In terms of biological role, possible metal-dependent hydrolase. This chain is Putative metal-dependent hydrolase BcerKBAB4_2443, found in Bacillus mycoides (strain KBAB4) (Bacillus weihenstephanensis).